A 365-amino-acid polypeptide reads, in one-letter code: Formamidopyrimidine-DNA glycosylase (365 aa).

Pro-2 acts as the Schiff-base intermediate with DNA in catalysis. The active-site Proton donor is Glu-3. Lys-61 serves as the catalytic Proton donor; for beta-elimination activity. The disordered stretch occupies residues 121 to 150 (RGRLAGHGDGMDGTSRTGSTLPGTGGTENS). A compositionally biased stretch (polar residues) spans 134–150 (TSRTGSTLPGTGGTENS). Residues His-186, Arg-205, and Arg-246 each coordinate DNA. The FPG-type zinc finger occupies 331–365 (RVYGRGGQPCRHCGTTLATAQVAGRTTVFCPQCQR). Arg-355 (proton donor; for delta-elimination activity) is an active-site residue.

Belongs to the FPG family. As to quaternary structure, monomer. It depends on Zn(2+) as a cofactor.

The catalysed reaction is Hydrolysis of DNA containing ring-opened 7-methylguanine residues, releasing 2,6-diamino-4-hydroxy-5-(N-methyl)formamidopyrimidine.. It carries out the reaction 2'-deoxyribonucleotide-(2'-deoxyribose 5'-phosphate)-2'-deoxyribonucleotide-DNA = a 3'-end 2'-deoxyribonucleotide-(2,3-dehydro-2,3-deoxyribose 5'-phosphate)-DNA + a 5'-end 5'-phospho-2'-deoxyribonucleoside-DNA + H(+). Functionally, involved in base excision repair of DNA damaged by oxidation or by mutagenic agents. Acts as a DNA glycosylase that recognizes and removes damaged bases. Has a preference for oxidized purines, such as 7,8-dihydro-8-oxoguanine (8-oxoG). Has AP (apurinic/apyrimidinic) lyase activity and introduces nicks in the DNA strand. Cleaves the DNA backbone by beta-delta elimination to generate a single-strand break at the site of the removed base with both 3'- and 5'-phosphates. The protein is Formamidopyrimidine-DNA glycosylase of Nitratidesulfovibrio vulgaris (strain ATCC 29579 / DSM 644 / CCUG 34227 / NCIMB 8303 / VKM B-1760 / Hildenborough) (Desulfovibrio vulgaris).